The chain runs to 196 residues: tRNA(Phe) 7-((3-amino-3-carboxypropyl)-4-demethylwyosine(37)-N(4))-methyltransferase 1 (196 aa).

The protein belongs to the TYW3 family.

It carries out the reaction 4-demethyl-7-[(3S)-3-amino-3-carboxypropyl]wyosine(37) in tRNA(Phe) + S-adenosyl-L-methionine = 7-[(3S)-3-amino-3-carboxypropyl]wyosine(37) in tRNA(Phe) + S-adenosyl-L-homocysteine + H(+). Its function is as follows. S-adenosyl-L-methionine-dependent methyltransferase that acts as a component of the wyosine derivatives biosynthesis pathway. Probably methylates N-4 position of wybutosine-86 to produce wybutosine-72. The sequence is that of tRNA(Phe) 7-((3-amino-3-carboxypropyl)-4-demethylwyosine(37)-N(4))-methyltransferase 1 from Pyrococcus horikoshii (strain ATCC 700860 / DSM 12428 / JCM 9974 / NBRC 100139 / OT-3).